The following is a 935-amino-acid chain: Kinesin heavy chain (935 aa).

The region spanning 5-329 (NIKVVCRFRP…LRFGARAKSI (325 aa)) is the Kinesin motor domain. ATP is bound by residues 87 to 94 (GQTGSGKT) and 237 to 244 (GSEKVGKT). The stretch at 342–887 (AELKALLKKV…SQKSQNSLAA (546 aa)) forms a coiled coil. Disordered stretches follow at residues 400–419 (APGF…TPVP) and 898–935 (RGNG…MNSR).

The protein belongs to the TRAFAC class myosin-kinesin ATPase superfamily. Kinesin family. Kinesin subfamily.

The protein localises to the cytoplasm. It is found in the cytoskeleton. Its function is as follows. Kinesin is a microtubule-associated force-producing protein that may play a role in organelle transport. Its motor activity is directed toward the microtubule's plus end. The speed of this motor is 4-5 times faster than its animal counterparts. The protein is Kinesin heavy chain of Syncephalastrum racemosum (Filamentous fungus).